The following is a 404-amino-acid chain: Probable ribosomal oxygenase HI_0396 (404 aa).

The JmjC domain maps to 102–231 (ELGQLWNKFG…LIDGISKGFC (130 aa)). His135, Asp137, and His199 together coordinate Fe cation.

The protein belongs to the ROX family. It depends on Fe(2+) as a cofactor.

In terms of biological role, oxygenase that catalyzes the hydroxylation of a ribosomal protein. This Haemophilus influenzae (strain ATCC 51907 / DSM 11121 / KW20 / Rd) protein is Probable ribosomal oxygenase HI_0396.